A 171-amino-acid chain; its full sequence is uncharacterized protein (171 aa).

One can recognise a PfpI endopeptidase domain in the interval 3-171 (KKVAIILANE…FNREIVKQLQ (169 aa)).

Belongs to the peptidase C56 family.

This is an uncharacterized protein from Staphylococcus aureus (strain MRSA252).